Reading from the N-terminus, the 395-residue chain is Pyridinium-3,5-bisthiocarboxylic acid mononucleotide nickel insertion protein (395 aa).

The protein belongs to the LarC family.

The enzyme catalyses Ni(II)-pyridinium-3,5-bisthiocarboxylate mononucleotide = pyridinium-3,5-bisthiocarboxylate mononucleotide + Ni(2+). Involved in the biosynthesis of a nickel-pincer cofactor ((SCS)Ni(II) pincer complex). Binds Ni(2+), and functions in nickel delivery to pyridinium-3,5-bisthiocarboxylic acid mononucleotide (P2TMN), to form the mature cofactor. Is thus probably required for the activation of nickel-pincer cofactor-dependent enzymes. In Staphylococcus epidermidis (strain ATCC 35984 / DSM 28319 / BCRC 17069 / CCUG 31568 / BM 3577 / RP62A), this protein is Pyridinium-3,5-bisthiocarboxylic acid mononucleotide nickel insertion protein.